The chain runs to 876 residues: Radial spoke head 10 homolog B (876 aa).

Positions 1–16 (MVKEKKKADKKGDKSA) are enriched in basic and acidic residues. A disordered region spans residues 1 to 71 (MVKEKKKADK…VQMEQSEEET (71 aa)). Positions 17–37 (RSPSSISDNPEASKQDSNASK) are enriched in polar residues. A compositionally biased stretch (low complexity) spans 39–50 (EVAPSAVVPVVE). MORN repeat units follow at residues 86 to 108 (YEGEKVRGLYEGEGFAVFQGGNT), 109 to 129 (YHGMFSEGLMHGQGTYIWADG), 132 to 154 (YEGDFVKNIPMNHGVYTWPDGST), 155 to 172 (YEGEVTNGMRNGFGMFKC), 179 to 196 (YIGHWCHGKRHGKGSIYY), 204 to 225 (YEGDWVYNIKKGWGIRCYKSGN), 227 to 244 (YEGQWENNMRHGEGRMRW), 251 to 268 (YTGHWEKGIQNGFGTHTW), 284 to 305 (YIGEFVNGFRHGQGKFYYASGA), and 307 to 328 (YEGEWASNKKQGRGRMTFKNGH). The span at 356–372 (WSDASQRSRQPRGSSVS) shows a compositional bias: polar residues. Positions 356-386 (WSDASQRSRQPRGSSVSAVREPETLRKLDGS) are disordered. Residues 375–386 (REPETLRKLDGS) are compositionally biased toward basic and acidic residues. Residues 790-832 (LKEKVKENQLQEAELAQQRQIENEELEARLNILREEEARKQDF) are a coiled coil. Residues 839–876 (LKEPSEIPASQPLTPSPPKEDLASIQTSKASPGKKKKK) are disordered.

As to quaternary structure, interacts with RSPH6A. Does not appear to be part of the axonemal radial spoke complexes 1 or 2. Expressed in ependymal cells (at protein level).

Its subcellular location is the cytoplasm. The protein localises to the cytoskeleton. It localises to the cilium axoneme. It is found in the cell projection. The protein resides in the cilium. Its subcellular location is the flagellum. Its function is as follows. May function as part of the axonemal radial spoke complex 3 (RS3). Radial spoke complexes are important for ciliary motility. The polypeptide is Radial spoke head 10 homolog B (Mus musculus (Mouse)).